The primary structure comprises 148 residues: Leghemoglobin 2 (148 aa).

Positions 2 to 148 constitute a Globin domain; it reads GFTEKQEALV…LSAAIKKAMS (147 aa). Nitrated tyrosine is present on Tyr-30. Ser-45 contacts heme b. Ser-45 is modified (phosphoserine). Residue His-63 participates in O2 binding. The heme b site is built by Lys-66, His-95, and Lys-98. Tyr-136 is subject to Nitrated tyrosine.

Belongs to the plant globin family. As to quaternary structure, monomer. Post-translationally, nitrated in effective nodules and particularly in hypoxic conditions; this mechanism may play a protective role in the symbiosis by buffering toxic peroxynitrite NO(2)(-). Nitration level decrease during nodule senescence. Phosphorylation at Ser-45 disrupts the molecular environment of its porphyrin ring oxygen binding pocket, thus leading to a reduced oxygen consumption and to the delivery of oxygen O(2) to symbiosomes. Stem nodules.

Its subcellular location is the cytoplasm. It localises to the cytosol. The protein resides in the nucleus. Functionally, leghemoglobin that reversibly binds oxygen O(2) through a pentacoordinated heme iron. In stem nodules, facilitates the diffusion of oxygen to the bacteroids while preventing the bacterial nitrogenase from being inactivated by buffering dioxygen, nitric oxide and carbon monoxide, and promoting the formation of reactive oxygen species (ROS, e.g. H(2)O(2)). This role is essential for symbiotic nitrogen fixation (SNF). This Sesbania rostrata protein is Leghemoglobin 2.